Here is a 671-residue protein sequence, read N- to C-terminus: DNA ligase (671 aa).

NAD(+)-binding positions include 32-36 (DAEYD), 81-82 (SL), and glutamate 113. Catalysis depends on lysine 115, which acts as the N6-AMP-lysine intermediate. Positions 136, 173, 290, and 314 each coordinate NAD(+). Zn(2+)-binding residues include cysteine 408, cysteine 411, cysteine 426, and cysteine 432. Positions 593–671 (EIDSPFAGKT…ETEMLRLLGS (79 aa)) constitute a BRCT domain.

Belongs to the NAD-dependent DNA ligase family. LigA subfamily. Mg(2+) serves as cofactor. The cofactor is Mn(2+).

The enzyme catalyses NAD(+) + (deoxyribonucleotide)n-3'-hydroxyl + 5'-phospho-(deoxyribonucleotide)m = (deoxyribonucleotide)n+m + AMP + beta-nicotinamide D-nucleotide.. DNA ligase that catalyzes the formation of phosphodiester linkages between 5'-phosphoryl and 3'-hydroxyl groups in double-stranded DNA using NAD as a coenzyme and as the energy source for the reaction. It is essential for DNA replication and repair of damaged DNA. The protein is DNA ligase of Escherichia coli O1:K1 / APEC.